We begin with the raw amino-acid sequence, 646 residues long: Cartilage acidic protein 1 (646 aa).

The first 28 residues, 1-28 (MAPSADPGMVRMALLLLPPLWLLPLTGG), serve as a signal peptide directing secretion. Residues 47-89 (DYDSNPTQLNYGVAVTDVDHDGDFEIVVAGYTGPNLVLKYNRA) form an FG-GAP 1; atypical repeat. An FG-GAP 2; atypical repeat occupies 106-148 (YALRDRQGNAIGVTACDIDGDGREEIYFLNTNNAFSGVATYTD). An FG-GAP 3; atypical repeat occupies 284 to 334 (AGVDDPHQHGRGVALADFNRDGKVDIVYGNWNGPHRLYLQMSAHGKVRFRD). The FG-GAP 4; atypical repeat unit spans residues 396-438 (GDALEPEGRGTGGVVTDFDGDGMLDLILSHGESMAQPLSVFRG). Positions 560-606 (DTNECIQFPFVCPRDKPVCVNTYGSYRCRTNKRCNRGYEPNEDGTAC) constitute an EGF-like domain. Intrachain disulfides connect C564/C578, C571/C587, and C593/C606.

The protein localises to the secreted. The protein resides in the extracellular space. It is found in the extracellular matrix. In Mus musculus (Mouse), this protein is Cartilage acidic protein 1 (Crtac1).